A 270-amino-acid chain; its full sequence is MASFKLMSSSNSDLSRRNSSSASSSPSIRSSHHLRPNPHADHSRISFAYGGGVNDYTFASDSKPFEMAIDVDRSIGDRNSVNNGKSVDDVWKEIVSGEQKTIMMKEEEPEDIMTLEDFLAKAEMDEGASDEIDVKIPTERLNNDGSYTFDFPMQRHSSFQMVEGSMGGGVTRGKRGRVMMEAMDKAAAQRQKRMIKNRESAARSRERKQAYQVELETLAAKLEEENEQLLKEIEESTKERYKKLMEVLIPVDEKPRPPSRPLSRSHSLEW.

The disordered stretch occupies residues 1-46 (MASFKLMSSSNSDLSRRNSSSASSSPSIRSSHHLRPNPHADHSRIS). The segment covering 8–29 (SSSNSDLSRRNSSSASSSPSIR) has biased composition (low complexity). The residue at position 27 (Ser27) is a Phosphoserine. The 64-residue stretch at 187–250 (AAQRQKRMIK…YKKLMEVLIP (64 aa)) folds into the bZIP domain. The interval 190-208 (RQKRMIKNRESAARSRERK) is basic motif. Residues 215–229 (LETLAAKLEEENEQL) form a leucine-zipper region. The tract at residues 250–270 (PVDEKPRPPSRPLSRSHSLEW) is disordered. Low complexity predominate over residues 261-270 (PLSRSHSLEW).

This sequence belongs to the bZIP family. In terms of assembly, DNA-binding heterodimer with GBF2 and GBF3; non DNA-binding homodimer.

The protein resides in the nucleus. Binds to the G-box motif (5'-CCACGTGG-3') of the rbcS-1A gene promoter. G-box and G-box-like motifs are cis-acting elements defined in promoters of certain plant genes which are regulated by such diverse stimuli as light-induction or hormone control. This chain is G-box-binding factor 4 (GBF4), found in Arabidopsis thaliana (Mouse-ear cress).